The chain runs to 186 residues: uncharacterized protein (186 aa).

Positions M1 to G18 are cleaved as a signal peptide. The N-palmitoyl cysteine moiety is linked to residue C19. C19 carries S-diacylglycerol cysteine lipidation.

The protein resides in the cell membrane. This is an uncharacterized protein from Escherichia coli (strain K12).